A 365-amino-acid polypeptide reads, in one-letter code: MGLFGLLKYAHRHRLVRSEAISTPPGVLTPIAIDLWNVMYTLMEKHYQETTEDNATTTARCLLRLLRMLHKRTYFPIFVSDRGIFGNGRIARGAKAIMAAAVRADGDGAADAPPRPRWSTMLHAPRIVHRLCVNLIRHMGYAYVDVSDMEADDVCANLYHTNTVAQVHTTDTDMILTGCDMILDIAPVFPLVLRCRDVLASLGVDYSEFLAAFVRCHTDLHRAPDVDSVQQVAESLEGREVAPEDVKLKYASRCPDIMRDAGKALALLPAAGDARSPRAEREFIQHVVAMLTPARHGHLSVLRRVPIVQEPSDVNKVFGSLLRHVKNETRAKELAGLFWKHIPPPPNYQAVLMAYWDDCNAHRRK.

Belongs to the herpesviridae VHS protein family.

The protein localises to the virion. Functionally, minor structural protein that acts as an endoribonuclease during lytic infection. Degrades host mRNAs in the cytoplasm by cutting them at preferred sites, including some in regions of translation initiation. This chain is Virion host shutoff protein (VHS), found in Sus scrofa (Pig).